Reading from the N-terminus, the 904-residue chain is Polycystin-2 (904 aa).

A disordered region spans residues 1 to 102 (MSSSRVRPQA…SSSGGVPGNF (102 aa)). The Cytoplasmic portion of the chain corresponds to 1 to 155 (MSSSRVRPQA…NSNREMYLKT (155 aa)). Positions 8 to 20 (PQAPQSPAASASA) are enriched in low complexity. Over residues 26 to 38 (EGIEMEKMHHEEV) the composition is skewed to basic and acidic residues. Low complexity predominate over residues 86-96 (SVSTTSSSSSG). The helical transmembrane segment at 156 to 177 (VLREMITYILFLLTLCIITYGM) threads the bilayer. Topologically, residues 178–404 (VSTNMYYYTK…TVRLLRYVSS (227 aa)) are extracellular. N-linked (GlcNAc...) asparagine glycans are attached at residues Asn235, Asn241, and Asn264. A disulfide bridge links Cys267 with Cys280. A glycan (N-linked (GlcNAc...) asparagine) is linked at Asn298. The chain crosses the membrane as a helical span at residues 405-425 (WDYFVGMCEVSFCLFVLYYLV). Residues 426 to 441 (EEALEIRLHRLRYFKS) are Cytoplasmic-facing. The helical transmembrane segment at 442–462 (LWNCLDVLIVALSVPAIIMNI) threads the bilayer. Over 463-489 (CRTSAVSHRLHFLLENHSTYPNFEPLA) the chain is Extracellular. N-linked (GlcNAc...) asparagine glycosylation occurs at Asn478. A helical membrane pass occupies residues 490 to 510 (RLQVHFNNLAAIIVFLSWVKL). Over 511–534 (FKFINFNKTMNQLSTTMSRCAKDL) the chain is Cytoplasmic. A helical transmembrane segment spans residues 535 to 556 (MGFAIMFFIVFLAYAQLAYLVF). At 557 to 568 (GTQVNDFSTFQA) the chain is on the extracellular side. An intramembrane region (pore-forming) is located at residues 569 to 583 (CIFTQFRIILGDFDF). Ca(2+) is bound at residue Leu578. The short motif at 578–580 (LGD) is the Selectivity filter element. Over 584–591 (SEIEEADS) the chain is Extracellular. A helical transmembrane segment spans residues 592 to 612 (VLGPIYFTTFVFFIFMILLNM). Residues 613-904 (FLAIINDTYS…DAAASGPAHL (292 aa)) lie on the Cytoplasmic side of the membrane. Residues 687–722 (HSDAEIEAIFAKYDLDGDQELTEHEHQQMRDDLEKE) enclose the EF-hand 1 domain. Positions 700, 702, 704, 706, and 711 each coordinate Ca(2+). Positions 708-732 (TEHEHQQMRDDLEKEREDLDLEHSS) are enriched in basic and acidic residues. 2 disordered regions span residues 708-770 (TEHE…SSGG) and 854-904 (ESDD…PAHL). Positions 740–759 (RSFSRSQDDSEEDDDEDSGH) are linker. One can recognise an EF-hand 2 domain in the interval 768 to 786 (SGGVSYEEFQVLVRRVDRM). Positions 770-809 (GVSYEEFQVLVRRVDRMEHSIGSIVSKIDAVIVKLEAMER) form a coiled coil. The segment covering 878–890 (LRPRSSRPPSSLS) has biased composition (low complexity).

The protein belongs to the polycystin family. In terms of assembly, homotetramer. Component of the heterotetrameric polycystin channel complex with pkd1; the tetramer contains one pkd1 chain and three pkd2 chains. Interacts with pkd1l1. Phosphorylated. Phosphorylation is important for protein function; a mutant human construct that lacks the N-terminal phosphorylation sites cannot complement a zebrafish pkd2-deficient mutant. Post-translationally, N-glycosylated. The four subunits in a tetramer probably differ in the extent of glycosylation; simultaneous glycosylation of all experimentally validated sites would probably create steric hindrance. In terms of processing, sumoylated by SUMO1; sumoylation regulates PKD2 membrane recycling. As to expression, detected along cilia and at the cilium basal body in Kupffer's vesicle at the 10 somite stage. Detected in heart at 48hpf. Detected in muscle and pronephric kidney at 48 hpf. Detected on trunk muscle sarcolemma and sarcomere, on ependymal cell cilia in brain, at the apical cell membrane in epithelial cells in the ear, at the lateral line organ and olfactory placode at 56 hpf. Detected in adult kidney (at protein level).

It localises to the basolateral cell membrane. Its subcellular location is the cell membrane. It is found in the sarcolemma. The protein resides in the cytoplasm. The protein localises to the myofibril. It localises to the sarcomere. Its subcellular location is the sarcoplasmic reticulum membrane. It is found in the apical cell membrane. The protein resides in the endoplasmic reticulum membrane. The protein localises to the cell projection. It localises to the cilium. Its subcellular location is the cytoskeleton. It is found in the cilium basal body. The protein resides in the cytoplasmic vesicle membrane. The enzyme catalyses K(+)(in) = K(+)(out). The catalysed reaction is Na(+)(in) = Na(+)(out). It carries out the reaction Ca(2+)(in) = Ca(2+)(out). Channel activity is regulated by phosphorylation. Channel activity is regulated by intracellular Ca(2+). In terms of biological role, forms a nonselective cation channel. Can function as a homotetrameric ion channel or can form heteromer with PKD1. Displays distinct function depending on its subcellular localization and regulation by its binding partners. In the primary cilium functions as a cation channel, with a preference for monovalent cations over divalent cations that allows K(+), Na(+) and Ca(2+) influx, with low selectivity for Ca(2+). In the endoplasmic reticulum, likely functions as a K(+) channel to facilitate Ca(2+) release. Required for normal oscillation of Ca(2+) levels within cilia; these oscillations of the intraciliary Ca(2+) levels can trigger cytoplasmic Ca(2+) signaling cascades. Required for normal temporal variation of the intracellular Ca(2+) levels in the heart. Plays a role in fluid-flow mechanosensation. Required for normal specification of the body left-right axis during embryogenesis, most likely via its role in ciliary Ca(2+) oscillations in Kupffer's vesicle. This chain is Polycystin-2, found in Danio rerio (Zebrafish).